Reading from the N-terminus, the 144-residue chain is D-aminoacyl-tRNA deacylase (144 aa).

Positions 136-137 (GP) match the Gly-cisPro motif, important for rejection of L-amino acids motif.

The protein belongs to the DTD family. As to quaternary structure, homodimer.

Its subcellular location is the cytoplasm. It catalyses the reaction glycyl-tRNA(Ala) + H2O = tRNA(Ala) + glycine + H(+). It carries out the reaction a D-aminoacyl-tRNA + H2O = a tRNA + a D-alpha-amino acid + H(+). An aminoacyl-tRNA editing enzyme that deacylates mischarged D-aminoacyl-tRNAs. Also deacylates mischarged glycyl-tRNA(Ala), protecting cells against glycine mischarging by AlaRS. Acts via tRNA-based rather than protein-based catalysis; rejects L-amino acids rather than detecting D-amino acids in the active site. By recycling D-aminoacyl-tRNA to D-amino acids and free tRNA molecules, this enzyme counteracts the toxicity associated with the formation of D-aminoacyl-tRNA entities in vivo and helps enforce protein L-homochirality. The protein is D-aminoacyl-tRNA deacylase of Pasteurella multocida (strain Pm70).